Consider the following 60-residue polypeptide: Three-finger toxin Mnn I (60 aa).

4 disulfides stabilise this stretch: cysteine 3–cysteine 22, cysteine 17–cysteine 39, cysteine 41–cysteine 52, and cysteine 53–cysteine 58.

This sequence belongs to the three-finger toxin family. Short-chain subfamily. Type I alpha-neurotoxin sub-subfamily. Expressed by the venom gland.

The protein localises to the secreted. Its function is as follows. Binds to muscle nicotinic acetylcholine receptor (nAChR) and inhibit acetylcholine from binding to the receptor, thereby impairing neuromuscular transmission. The chain is Three-finger toxin Mnn I from Micrurus nigrocinctus (Central American coral snake).